A 194-amino-acid polypeptide reads, in one-letter code: Calcium channel flower (194 aa).

Helical transmembrane passes span 35 to 55 (LGIVAAFFAILFGLWNVFSII), 66 to 88 (IIQMVAGFVVMLLEALCCFVCFE), and 107 to 127 (GLYIAMAIPPIILCFGLASLF).

The protein belongs to the calcium channel flower family. As to quaternary structure, homomultimer. Associates with the dally/ magu complex.

The protein localises to the cell membrane. It localises to the cytoplasmic vesicle. Its subcellular location is the secretory vesicle. It is found in the synaptic vesicle membrane. The protein resides in the presynaptic cell membrane. The protein localises to the endosome. Its activity is regulated as follows. Channel activity is inhibited by La(3+), which reduces Ca(2+) influx and thus inhibits it's function in promoting activity-dependent bulk endocytosis (ADBE) in response to high stimuli. Its function is as follows. Transmembrane protein which mediates synaptic endocytosis, fitness-based cell culling, neuronal culling, morphogen gradient scaling, and calcium transport. Regulates synaptic endocytosis and hence couples exo- with endocytosis. Controls two major modes of synaptic vesicle (SV) endocytosis in the synaptic boutons of neuromuscular junctions (NMJs); Ca(2+) channel-independent Clathrin-mediated endocytosis (CME) in response to mild stimulation, and Ca(2+) channel-dependent activity-dependent bulk endocytosis (ADBE) in response to strong stimulation. Functions in ADBE and subsequent SV reformation from bulk endosomes by initiating Ca(2+) channel-dependent phosphatidylinositol 4,5-bisphosphate (PtdIns(4,5)P2) compartmentalization in synaptic boutons. There it acts at the periactive zone to provide the low Ca(2+) levels required to initiate Calcineurin activation and upregulate PtdIns(4,5)P2. Conversely PtdIns(4,5)P2 enhances fwe Ca(2+) channel-activity, establishing a positive feedback loop that induces PtdIns(4,5)P2 microdomain at the periactive zone. These microdomains trigger bulk membrane invagination (i.e. ADBE) by triggering actin polymerization while also promoting localization of fwe to bulk endosomes, thereby removing the ADBE trigger to reduce endocytosis and prevent excess membrane uptake. PtdIns(4,5)P2 then promotes SV reformation from the bulk endosomes, to coordinate ADBE and subsequent SV reformation. Different combinations of the flower isoforms at the cell membrane are also required for the identification and elimination of suboptimal or supernumerary cells during development, regeneration, and adulthood. Required for the recognition and elimination of unfit cells in the developing wing during cell competition. In the developing pupal retina, mediates the elimination of unwanted postmitotic neurons, including supernumerary photoreceptor neurons that form at the periphery of the retina and are contained within incomplete ommatidia units. Also required for efficient elimination and replacement of old neurons by newly generated neurons during regeneration in the adult brain following mechanical injury. Downstream of the flower fitness fingerprints, cells identified as unwanted or unfit are eliminated via apoptosis through the expression of ahuizotl (azot). However, the cells marked for elimination by the flower isoforms only undergo apoptosis if additional thresholds are met; (1) their neighboring fit/healthy cells express different levels of the fwe isoforms, and (2) the levels of the protective signal SPARC expressed by the loser or unwanted cells are unable to inhibit caspase activation. These additional thresholds for flower-mediated apoptosis, allows useful cells to recover from transient and limited stress before they are unnecessarily eliminated. Functions with dally and magu in a mechanism of scaling, which utilises apoptosis to ensure that the dpp morphogen gradient, which mediates organ growth, remains proportional to the size of the growing wing. In this mechanism, fwe represses dally- and Magu-dependent activity in expanding the gradient, and dally/Magu inhibits fwe-dependent apoptosis to keep cell death rate low. When the levels of these different proteins are optimally regulated the gradient correctly scales with organ growth but when this fails, fwe-mediated apoptosis is activated to trim the developing tissue to match the correct size of the gradient. The polypeptide is Calcium channel flower (Drosophila sechellia (Fruit fly)).